The sequence spans 338 residues: MPVLSNPSFYLPLVDITPFLENPHGAAAQDVIESVRTACKSTGFFQIKGHQVPLRLQKSVFEASARFFALPLKNKLELDSRKTVGFRGYDVMETQSYELEFGAVQEADALRDIKEGFFIATDLPPDHPHVANGRFLQGPNVWPKPEQLAPEDFQSVLEEYYTEMQRLSHVVLSLLAATLPYGPHVFDELETCDPMSLLRLLHYPRGLEKQDGKKLQLGAGEHTDFGTFTLLLQDEHPGLEVQDSVTGEWHGVPPQEDVYIVNVADILSTMTEGDYKSSVHRVWNIKSNDRYSVVFFYDGNLDYKVKPLRSSGQDENEEIDAPTIEEHVRSRLTASYAI.

The region spanning 193-299 (DPMSLLRLLH…RYSVVFFYDG (107 aa)) is the Fe2OG dioxygenase domain. Residues H222, D224, and H280 each coordinate Fe cation. R290 contributes to the 2-oxoglutarate binding site.

This sequence belongs to the iron/ascorbate-dependent oxidoreductase family. Fe(2+) serves as cofactor.

The catalysed reaction is clavatol + 2-oxoglutarate + O2 = hydroxyclavatol + succinate + CO2. The protein operates within secondary metabolite biosynthesis. 2-oxoglutarate-dependent dioxygenase; part of the cla gene cluster that produces clavatol and ortho-quinone methide. The clavatol biosynthesis cluster cla and the terrestric acid cluster tra are both involved in the production of peniphenones and penilactones. The non-reducing PKS claF is responsible for the formation of clavatol from successive condensations of 3 malonyl-CoA units, presumably with a simple acetyl-CoA starter unit, and 2 methylation steps. The esterase claE probably collaborates with claF by catalyzing the hydrolysis of ACP-bound acyl intermediates to free the ACP from stalled intermediates. The clavatol oxidase claD then converts clavatol to hydroxyclavatol. Spontaneous dehydration of hydroxyclavatol leads to the accumulation of the highly active ortho-quinone methide. On the other hand, the PKS-NRPS hybrid traA is involved in the formation of crustosic acid, with the help of traB and traD. The polyketide synthase module (PKS) of traA is responsible for the synthesis of the polyketide backbone via the condensation of an acetyl-CoA starter unit with 3 malonyl-CoA units. The downstream nonribosomal peptide synthetase (NRPS) module then amidates the carboxyl end of the polyketide with L-malic acid. Because traA lacks a designated enoylreductase (ER) domain, the required activity is provided the enoyl reductase traG. Crustosic acid undergoes decarboxylation and isomerization to the terrestric acid, catalyzed by the 2-oxoglutarate-dependent dioxygenase traH. Both acids are further converted to the 2 gamma-butyrolactones (R)-5-methyltetronic acid and (S)-5-carboxylmethyltetronic acid, with involvement of the cytochrome P450 monooxygenase claJ. Spontaneous addition of the methide to these gamma-butyrolactones leads to peniphenone D and penilactone D, which undergo again stereospecific attacking by methide to give penilactones A and B. The chain is Clavatol oxidase claD from Penicillium crustosum (Blue mold fungus).